The sequence spans 581 residues: MKASQFFIATLKEAPADAEVKSHQLMMRAGMIKRLGAGIYNYMPMGLRVIRKVEAIIREEMNRAGAVELLMPVVQPAELWQETGRFDKMGPELLRVKDRHDRDFIIQPTSEEVVTDIARQELRSYKQLPKNFYHIQTKFRDERRPRFGIMRGREFTMKDAYSFDRDAASAARSYDAMFAAYKRIFDRFGLQYRAVAADTGAIGGDLSHEFQVIADTGEDAIVYCPTSDYAANIELAEAVSLIAERGAATESMAKTPTPGKSTCADVAQLLNLPLARTVKSLVLATDELNEAGDVAKTTVWLLLVRGDHDMNEVKVGKVDGLKAGFRFATVAEIESHFGCKPGYLGPIGLKKPVKVIADRTVAQMADFICGANEIDFHLTGINWGRDLPEPDAVADIRNVVEGDPSPDGQGVLAIQRGIEVGHVFFLGTKYSKAMNATYLDENGKPQFMEMGCYGIGVTRILGAAIEQKHDARGILWPDAIAPFTVVVCPIGYDRSAEVKAAADALHDELQAAGIDVMLDDRGERPGAMFADWELIGVPHRVVISDRGLKAGQVEYQGRCDEAASTVPAAEVAAFVKGRLRS.

This sequence belongs to the class-II aminoacyl-tRNA synthetase family. ProS type 1 subfamily. Homodimer.

Its subcellular location is the cytoplasm. The catalysed reaction is tRNA(Pro) + L-proline + ATP = L-prolyl-tRNA(Pro) + AMP + diphosphate. In terms of biological role, catalyzes the attachment of proline to tRNA(Pro) in a two-step reaction: proline is first activated by ATP to form Pro-AMP and then transferred to the acceptor end of tRNA(Pro). As ProRS can inadvertently accommodate and process non-cognate amino acids such as alanine and cysteine, to avoid such errors it has two additional distinct editing activities against alanine. One activity is designated as 'pretransfer' editing and involves the tRNA(Pro)-independent hydrolysis of activated Ala-AMP. The other activity is designated 'posttransfer' editing and involves deacylation of mischarged Ala-tRNA(Pro). The misacylated Cys-tRNA(Pro) is not edited by ProRS. This Leptothrix cholodnii (strain ATCC 51168 / LMG 8142 / SP-6) (Leptothrix discophora (strain SP-6)) protein is Proline--tRNA ligase.